Here is a 35-residue protein sequence, read N- to C-terminus: Sperm protamine alpha isoform 2 (35 aa).

The interval 1–35 is disordered; the sequence is MPRRRRRASRPIRRRRRARRSTAVRRRRRVVRRRR. Phosphoserine occurs at positions 9 and 21.

In terms of processing, phosphorylated in immature sperm. Dephosphorylated in mature sperm allowing a stronger interaction with DNA. Gonads.

The protein localises to the nucleus. Its subcellular location is the chromosome. Its function is as follows. Protamines substitute for histones in the chromatin of sperm during the haploid phase of spermatogenesis. They compact sperm DNA into a highly condensed, stable and inactive complex. The chain is Sperm protamine alpha isoform 2 from Scomber scombrus (Atlantic mackerel).